A 150-amino-acid polypeptide reads, in one-letter code: UPF0756 membrane protein HD_1071 (150 aa).

4 helical membrane passes run 1 to 21 (MSLQ…LGVL), 52 to 72 (YGLT…IVSG), 82 to 102 (ILSW…WLGG), and 114 to 134 (IITG…GIPV).

It belongs to the UPF0756 family.

Its subcellular location is the cell membrane. The sequence is that of UPF0756 membrane protein HD_1071 from Haemophilus ducreyi (strain 35000HP / ATCC 700724).